Reading from the N-terminus, the 450-residue chain is Chromosomal replication initiator protein DnaA (450 aa).

The interval Met1 to Lys69 is domain I, interacts with DnaA modulators. The domain II stretch occupies residues Lys69 to Ser113. The domain III, AAA+ region stretch occupies residues Ser114–Ser330. ATP-binding residues include Gly158, Gly160, Lys161, and Ser162. The tract at residues Ser331 to Lys450 is domain IV, binds dsDNA.

This sequence belongs to the DnaA family. Oligomerizes as a right-handed, spiral filament on DNA at oriC.

It is found in the cytoplasm. In terms of biological role, plays an essential role in the initiation and regulation of chromosomal replication. ATP-DnaA binds to the origin of replication (oriC) to initiate formation of the DNA replication initiation complex once per cell cycle. Binds the DnaA box (a 9 base pair repeat at the origin) and separates the double-stranded (ds)DNA. Forms a right-handed helical filament on oriC DNA; dsDNA binds to the exterior of the filament while single-stranded (ss)DNA is stabiized in the filament's interior. The ATP-DnaA-oriC complex binds and stabilizes one strand of the AT-rich DNA unwinding element (DUE), permitting loading of DNA polymerase. After initiation quickly degrades to an ADP-DnaA complex that is not apt for DNA replication. Binds acidic phospholipids. This chain is Chromosomal replication initiator protein DnaA, found in Pelobacter propionicus (strain DSM 2379 / NBRC 103807 / OttBd1).